Reading from the N-terminus, the 127-residue chain is Small ribosomal subunit protein bS6 (127 aa).

The disordered stretch occupies residues 96–127 (VTTPSPMMKEEKSRSLTPAAGDEGKPAEAAEA). Basic and acidic residues predominate over residues 117 to 127 (DEGKPAEAAEA).

It belongs to the bacterial ribosomal protein bS6 family.

In terms of biological role, binds together with bS18 to 16S ribosomal RNA. This Azoarcus sp. (strain BH72) protein is Small ribosomal subunit protein bS6.